The primary structure comprises 452 residues: MKETTSFSQKLKQFVLLFFPIFVTQMSLFAMSFFDTTMSGHASPTDLSGVAIGTSIWIPVSTGLTGILMATTPIVAQLVGSKKKEDVPHVVIQAVYLAICASFVVILIGFFVVSPILNGMRLEEPVERIAAQFLSIIAIGIIPLFTYTVLRGFIDALGKTRTTMIITLLSLPINVILNYLLIFGNFGFPKLGGVGAAIASTATYWCILIITVIIIQTKEPFASFNIFKQLYRPSLSSWIAFLKLGVPIGFAIFFETSIFAAVTLMMSNFSTTTIAAHQAAMNFASLLYMTPLSLAMAMTIAVGFEVGAKRYDNAKQYGLIGIGLALAFALLYSILLYFFDDQIASIYTTDAKVHHLAKEFLIFAILFQISDAIATPVQGALRGYKDVNVALIMTLIAYWIIGLPLGYILATYTEWAAKGYWIGLIIGLAFGAAFLLIRLFQVQRKYTTQNSR.

The next 12 membrane-spanning stretches (helical) occupy residues Q13 to F34, G49 to T71, I92 to S114, I129 to R151, M164 to F183, G193 to I215, A240 to V262, N282 to F304, Y317 to F339, E359 to L381, N388 to A410, and Y420 to V442.

The protein belongs to the multi antimicrobial extrusion (MATE) (TC 2.A.66.1) family.

Its subcellular location is the cell membrane. Its function is as follows. Multidrug efflux pump. In Bacillus cereus (strain ATCC 14579 / DSM 31 / CCUG 7414 / JCM 2152 / NBRC 15305 / NCIMB 9373 / NCTC 2599 / NRRL B-3711), this protein is Probable multidrug resistance protein NorM (norM).